The following is a 33-amino-acid chain: ATP synthase 27 kDa subunit, mitochondrial (33 aa).

The protein resides in the mitochondrion. It is found in the mitochondrion inner membrane. Mitochondrial membrane ATP synthase (F(1)F(0) ATP synthase or Complex V) produces ATP from ADP in the presence of a proton gradient across the membrane which is generated by electron transport complexes of the respiratory chain. F-type ATPases consist of two structural domains, F(1) - containing the extramembraneous catalytic core and F(0) - containing the membrane proton channel, linked together by a central stalk and a peripheral stalk. During catalysis, ATP synthesis in the catalytic domain of F(1) is coupled via a rotary mechanism of the central stalk subunits to proton translocation. Part of the complex F(0) domain. The chain is ATP synthase 27 kDa subunit, mitochondrial from Solanum tuberosum (Potato).